The primary structure comprises 419 residues: UDP-N-acetylglucosamine 1-carboxyvinyltransferase 2 (419 aa).

A phosphoenolpyruvate-binding site is contributed by 24–25; sequence KN. Residue arginine 94 participates in UDP-N-acetyl-alpha-D-glucosamine binding. Cysteine 118 functions as the Proton donor in the catalytic mechanism. Residue cysteine 118 is modified to 2-(S-cysteinyl)pyruvic acid O-phosphothioketal. UDP-N-acetyl-alpha-D-glucosamine contacts are provided by residues 123–127, aspartate 307, and isoleucine 329; that span reads RPIDQ.

It belongs to the EPSP synthase family. MurA subfamily.

It is found in the cytoplasm. The catalysed reaction is phosphoenolpyruvate + UDP-N-acetyl-alpha-D-glucosamine = UDP-N-acetyl-3-O-(1-carboxyvinyl)-alpha-D-glucosamine + phosphate. It functions in the pathway cell wall biogenesis; peptidoglycan biosynthesis. In terms of biological role, cell wall formation. Adds enolpyruvyl to UDP-N-acetylglucosamine. The protein is UDP-N-acetylglucosamine 1-carboxyvinyltransferase 2 of Staphylococcus aureus (strain bovine RF122 / ET3-1).